Consider the following 285-residue polypeptide: ATP phosphoribosyltransferase (285 aa).

This sequence belongs to the ATP phosphoribosyltransferase family. Long subfamily. Mg(2+) serves as cofactor.

Its subcellular location is the cytoplasm. The enzyme catalyses 1-(5-phospho-beta-D-ribosyl)-ATP + diphosphate = 5-phospho-alpha-D-ribose 1-diphosphate + ATP. The protein operates within amino-acid biosynthesis; L-histidine biosynthesis; L-histidine from 5-phospho-alpha-D-ribose 1-diphosphate: step 1/9. Feedback inhibited by histidine. Functionally, catalyzes the condensation of ATP and 5-phosphoribose 1-diphosphate to form N'-(5'-phosphoribosyl)-ATP (PR-ATP). Has a crucial role in the pathway because the rate of histidine biosynthesis seems to be controlled primarily by regulation of HisG enzymatic activity. This is ATP phosphoribosyltransferase from Sulfurisphaera tokodaii (strain DSM 16993 / JCM 10545 / NBRC 100140 / 7) (Sulfolobus tokodaii).